The following is a 165-amino-acid chain: S-(2-succino)cysteine N-acetyltransferase (165 aa).

An N-acetyltransferase domain is found at 3–162 (PRYRLAVERD…ITVYMKKQLR (160 aa)).

Belongs to the acetyltransferase family.

The catalysed reaction is S-(2-succino)-L-cysteine + acetyl-CoA = N-acetyl-S-(2-succino)-L-cysteine + CoA + H(+). It participates in amino-acid biosynthesis; L-cysteine biosynthesis. Its function is as follows. Catalyzes the N-acetylation of S-(2-succino)cysteine. Is involved in a S-(2-succino)cysteine (2SC) degradation pathway that allows B.subtilis to grow on 2SC as a sole sulfur source, via its metabolization to cysteine. Moreover, 2SC is a toxic compound in B.subtilis at high exogenous concentrations, and this enzyme relieves 2SC toxicity via N-acetylation. This is S-(2-succino)cysteine N-acetyltransferase from Bacillus subtilis (strain 168).